The chain runs to 885 residues: Dipeptidyl peptidase 9 (885 aa).

Active-site charge relay system residues include serine 752, aspartate 830, and histidine 862. Serine 752 contributes to the Val-boroPro binding site.

This sequence belongs to the peptidase S9B family. DPPIV subfamily. Homodimer. Forms a ternary complex with NLRP1, composed of a DPP9 homodimer, one full-length NLRP1 protein, and one cleaved C-terminus of NLRP1 (NACHT, LRR and PYD domains-containing protein 1, C-terminus).

It is found in the nucleus. It catalyses the reaction Release of an N-terminal dipeptide, Xaa-Yaa-|-Zaa-, from a polypeptide, preferentially when Yaa is Pro, provided Zaa is neither Pro nor hydroxyproline.. Its function is as follows. Dipeptidyl peptidase that cleaves off N-terminal dipeptides from proteins having a Pro or Ala residue at position 2. Acts as a key inhibitor of the NLRP1 inflammasome. The sequence is that of Dipeptidyl peptidase 9 from Danio rerio (Zebrafish).